Reading from the N-terminus, the 674-residue chain is Linear primary-alkylsulfatase (674 aa).

Residues 1 to 41 (MKLNALSTATHGSRSSPVKLWKFSTSFLLAASIIVSGQSWA) form the signal peptide. Zn(2+) contacts are provided by His192, His194, Asp196, His197, Glu303, and Glu322. Residues 330-335 (NTYSLR) and Arg340 each bind sulfate. Residue His367 coordinates Zn(2+). Residue Tyr428 participates in sulfate binding.

It belongs to the metallo-beta-lactamase superfamily. Type III sulfatase family. In terms of assembly, homodimer. Zn(2+) serves as cofactor.

Its subcellular location is the periplasm. It catalyses the reaction a primary linear alkyl sulfate ester + H2O = a primary alcohol + sulfate + H(+). Inhibited by EDTA. Slightly activated in the presence of Ca(2+). Its function is as follows. Alkylsulfatase that cleaves primary alkyl sulfates such as sodium octyl sulfate and the widely used detergent sodium dodecyl sulfate (SDS). This Pseudomonas sp protein is Linear primary-alkylsulfatase.